The sequence spans 293 residues: Glutamyl-Q tRNA(Asp) synthetase (293 aa).

L-glutamate-binding positions include arginine 8–threonine 12 and glutamate 44. A 'HIGH' region motif is present at residues proline 11–serine 21. Zn(2+)-binding residues include cysteine 100, cysteine 102, tyrosine 114, and cysteine 118. Positions 171 and 189 each coordinate L-glutamate. The short motif at lysine 227–serine 231 is the 'KMSKS' region element. Lysine 230 is a binding site for ATP.

The protein belongs to the class-I aminoacyl-tRNA synthetase family. GluQ subfamily. Zn(2+) is required as a cofactor.

Its function is as follows. Catalyzes the tRNA-independent activation of glutamate in presence of ATP and the subsequent transfer of glutamate onto a tRNA(Asp). Glutamate is transferred on the 2-amino-5-(4,5-dihydroxy-2-cyclopenten-1-yl) moiety of the queuosine in the wobble position of the QUC anticodon. This Pseudomonas aeruginosa (strain LESB58) protein is Glutamyl-Q tRNA(Asp) synthetase.